We begin with the raw amino-acid sequence, 302 residues long: Sulfate adenylyltransferase subunit 2 (302 aa).

Residues 280-302 are disordered; sequence RQGRLIDSDQSASMEQKKRQGYF.

Belongs to the PAPS reductase family. CysD subfamily. As to quaternary structure, heterodimer composed of CysD, the smaller subunit, and CysN.

It catalyses the reaction sulfate + ATP + H(+) = adenosine 5'-phosphosulfate + diphosphate. Its pathway is sulfur metabolism; hydrogen sulfide biosynthesis; sulfite from sulfate: step 1/3. In terms of biological role, with CysN forms the ATP sulfurylase (ATPS) that catalyzes the adenylation of sulfate producing adenosine 5'-phosphosulfate (APS) and diphosphate, the first enzymatic step in sulfur assimilation pathway. APS synthesis involves the formation of a high-energy phosphoric-sulfuric acid anhydride bond driven by GTP hydrolysis by CysN coupled to ATP hydrolysis by CysD. This chain is Sulfate adenylyltransferase subunit 2, found in Shewanella putrefaciens (strain CN-32 / ATCC BAA-453).